Reading from the N-terminus, the 637-residue chain is Sodium-dependent phosphate transport protein 2A (637 aa).

The Cytoplasmic segment spans residues 1 to 103; it reads MMSYSERLGG…LAQVGTKLLK (103 aa). Phosphoserine is present on residues Ser-14 and Ser-34. The helical transmembrane segment at 104-125 threads the bilayer; that stretch reads VPLMLGFLYLFVCSLDVLSSAF. At 126–145 the chain is on the extracellular side; it reads QLAGGKVAGDIFKDNAILSN. Residues 146–163 form a helical membrane-spanning segment; that stretch reads PVAGLVVGILVTVLVQSS. Topologically, residues 164 to 216 are cytoplasmic; it reads STSTSIIVSMVSSGLLEVSSAIPIIMGSNIGTSVTNTIVALMQAGDRTDFRRA. The chain crosses the membrane as a helical span at residues 217–236; it reads FAGATVHDCFNWLSVLVLLP. 2 disulfide bridges follow: Cys-225-Cys-520 and Cys-306-Cys-334. The Extracellular segment spans residues 237-345; it reads LEAATGYLHH…HIFVDTGLPD (109 aa). N-linked (GlcNAc...) asparagine glycans are attached at residues Asn-298 and Asn-328. Residues 346–368 form a helical membrane-spanning segment; it reads LAVGLILLAGSLVVLCTCLILLV. At 369-410 the chain is on the cytoplasmic side; sequence KMLNSLLKGQVANVIQKVINTDFPAPFTWVTGYFAMVVGASM. The helical transmembrane segment at 411-434 threads the bilayer; sequence TFVVQSSSVFTSAITPLIGLGVIS. The Extracellular portion of the chain corresponds to 435–464; that stretch reads IERAYPLTLGSNIGTTTTAILAALASPREK. Residues 465-485 form a helical membrane-spanning segment; sequence LSSSFQIALCHFFFNISGILL. Topologically, residues 486 to 511 are cytoplasmic; that stretch reads WYPLPCTRLPIRMAKALGKRTAKYRW. Thr-506 is subject to Phosphothreonine; by PKC. A helical transmembrane segment spans residues 512 to 532; that stretch reads FAVLYLLVCFLLLPSLVFGIS. Topologically, residues 533 to 537 are extracellular; the sequence is MAGWQ. The chain crosses the membrane as a helical span at residues 538–559; the sequence is AMVGVGTPFGALLAFVVLVNVL. Over 560–637 the chain is Cytoplasmic; it reads QSRSPGHLPK…LPAHHNATRL (78 aa). Ser-605 bears the Phosphoserine mark. At Thr-621 the chain carries Phosphothreonine. Position 623 is a phosphoserine (Ser-623).

Belongs to the SLC34A transporter family. Interacts via its C-terminal region with NHERF4. Interacts with NHERF1. Interacts with TMEM174; regulates SLC34A1 internalization by PTH and FGF23. Kidney.

It is found in the apical cell membrane. The protein localises to the cell membrane. The enzyme catalyses 3 Na(+)(out) + phosphate(out) = 3 Na(+)(in) + phosphate(in). With respect to regulation, transport activity is significantly increased in response to dietary phosphate deprivation. Involved in actively transporting phosphate into cells via Na(+) cotransport in the renal brush border membrane. The cotransport has a Na(+):Pi stoichiometry of 3:1 and is electrogenic. In Rattus norvegicus (Rat), this protein is Sodium-dependent phosphate transport protein 2A.